A 517-amino-acid polypeptide reads, in one-letter code: Alpha-amylase (517 aa).

An N-terminal signal peptide occupies residues 1 to 21; that stretch reads MAHLLLAVVAITLALSQSVFG. Cysteine 52 and cysteine 108 are oxidised to a cystine. Residues asparagine 122, arginine 178, and aspartate 187 each contribute to the Ca(2+) site. A chloride-binding site is contributed by arginine 215. The active-site Nucleophile is the aspartate 217. Histidine 221 is a Ca(2+) binding site. The Proton donor role is filled by glutamate 253. A chloride-binding site is contributed by arginine 355. Cystine bridges form between cysteine 397-cysteine 403 and cysteine 470-cysteine 482.

This sequence belongs to the glycosyl hydrolase 13 family. In terms of assembly, monomer. It depends on Ca(2+) as a cofactor. Chloride is required as a cofactor.

It localises to the secreted. It catalyses the reaction Endohydrolysis of (1-&gt;4)-alpha-D-glucosidic linkages in polysaccharides containing three or more (1-&gt;4)-alpha-linked D-glucose units.. With respect to regulation, activated by chloride ions. Inhibited by acarbose. Not inhibited by wheat alpha-amylase inhibitors 1 (WI-1, the tetrameric form) or 3 (WI-3, the monomeric form) and bean alpha-amylase inhibitor 1 (alphaAI-1). The chain is Alpha-amylase from Acarus siro (Flour mite).